Consider the following 178-residue polypeptide: Ribosomal RNA small subunit methyltransferase G (178 aa).

S-adenosyl-L-methionine is bound by residues Gly-54, Leu-59, 105–106 (LE), and Arg-120.

The protein belongs to the methyltransferase superfamily. RNA methyltransferase RsmG family.

The protein resides in the cytoplasm. It catalyses the reaction guanosine(527) in 16S rRNA + S-adenosyl-L-methionine = N(7)-methylguanosine(527) in 16S rRNA + S-adenosyl-L-homocysteine. Its function is as follows. Specifically methylates the N7 position of guanine in position 527 of 16S rRNA. This chain is Ribosomal RNA small subunit methyltransferase G, found in Helicobacter pylori (strain J99 / ATCC 700824) (Campylobacter pylori J99).